A 690-amino-acid polypeptide reads, in one-letter code: Translation factor GUF1, mitochondrial (690 aa).

A disordered region spans residues 40–68; sequence SVTVPAARRHNSTKSTNSTTSTNSTTATS. Positions 52-68 are enriched in low complexity; sequence TKSTNSTTSTNSTTATS. One can recognise a tr-type G domain in the interval 89 to 272; the sequence is ERYRNFCIVA…AVIKKMPAPV (184 aa). GTP is bound by residues 98–105, 165–169, and 219–222; these read AHIDHGKS, DTPGH, and NKID.

This sequence belongs to the TRAFAC class translation factor GTPase superfamily. Classic translation factor GTPase family. LepA subfamily.

It localises to the mitochondrion inner membrane. It carries out the reaction GTP + H2O = GDP + phosphate + H(+). Promotes mitochondrial protein synthesis. May act as a fidelity factor of the translation reaction, by catalyzing a one-codon backward translocation of tRNAs on improperly translocated ribosomes. Binds to mitochondrial ribosomes in a GTP-dependent manner. This is Translation factor GUF1, mitochondrial from Sordaria macrospora (strain ATCC MYA-333 / DSM 997 / K(L3346) / K-hell).